The chain runs to 388 residues: Lipid-A-disaccharide synthase (388 aa).

This sequence belongs to the LpxB family.

It catalyses the reaction a lipid X + a UDP-2-N,3-O-bis[(3R)-3-hydroxyacyl]-alpha-D-glucosamine = a lipid A disaccharide + UDP + H(+). Its pathway is bacterial outer membrane biogenesis; LPS lipid A biosynthesis. Its function is as follows. Condensation of UDP-2,3-diacylglucosamine and 2,3-diacylglucosamine-1-phosphate to form lipid A disaccharide, a precursor of lipid A, a phosphorylated glycolipid that anchors the lipopolysaccharide to the outer membrane of the cell. The protein is Lipid-A-disaccharide synthase of Burkholderia mallei (strain NCTC 10247).